Reading from the N-terminus, the 285-residue chain is Bifunctional protein FolD (285 aa).

Residues 165-167 (GAS) and Ile-232 each bind NADP(+).

This sequence belongs to the tetrahydrofolate dehydrogenase/cyclohydrolase family. In terms of assembly, homodimer.

The catalysed reaction is (6R)-5,10-methylene-5,6,7,8-tetrahydrofolate + NADP(+) = (6R)-5,10-methenyltetrahydrofolate + NADPH. The enzyme catalyses (6R)-5,10-methenyltetrahydrofolate + H2O = (6R)-10-formyltetrahydrofolate + H(+). It participates in one-carbon metabolism; tetrahydrofolate interconversion. In terms of biological role, catalyzes the oxidation of 5,10-methylenetetrahydrofolate to 5,10-methenyltetrahydrofolate and then the hydrolysis of 5,10-methenyltetrahydrofolate to 10-formyltetrahydrofolate. The sequence is that of Bifunctional protein FolD from Sulfurihydrogenibium sp. (strain YO3AOP1).